Reading from the N-terminus, the 113-residue chain is Large ribosomal subunit protein uL22 (113 aa).

The protein belongs to the universal ribosomal protein uL22 family. Part of the 50S ribosomal subunit.

Functionally, this protein binds specifically to 23S rRNA; its binding is stimulated by other ribosomal proteins, e.g. L4, L17, and L20. It is important during the early stages of 50S assembly. It makes multiple contacts with different domains of the 23S rRNA in the assembled 50S subunit and ribosome. The globular domain of the protein is located near the polypeptide exit tunnel on the outside of the subunit, while an extended beta-hairpin is found that lines the wall of the exit tunnel in the center of the 70S ribosome. In Opitutus terrae (strain DSM 11246 / JCM 15787 / PB90-1), this protein is Large ribosomal subunit protein uL22.